The following is a 344-amino-acid chain: MSKSGVLLLNLGGPETQADVQPFLYNLFADPELIRLPFPFLQRAFAWAISTLRAEKSRRNYAAIGGGSPLRRITAEQARELQAHLVAEGYDVPVYVAMRYWHPLIESVVQQIKSDGITRLVVLPLYPQYSISTTGSSFKLLDRLWAEDPELACIERRQICSWYDQPQYVQAMARAIREQLDGFAEPEGVHVLFSAHGIPESYVTEAGDPYQREMEACVRLIWKQVGRPNDHTLSYQSRVGSVRWLQPYTERVILELGSRGVKQLLVVPISFVSEHIETLQEIDIEYRELAHRAGIADFRRVPALNADPLFIAGLAALVRPHLLTPGLAAPAFVPAAVGSSLLER.

His-196 and Glu-277 together coordinate Fe cation.

This sequence belongs to the ferrochelatase family.

It is found in the cytoplasm. It catalyses the reaction heme b + 2 H(+) = protoporphyrin IX + Fe(2+). It functions in the pathway porphyrin-containing compound metabolism; protoheme biosynthesis; protoheme from protoporphyrin-IX: step 1/1. In terms of biological role, catalyzes the ferrous insertion into protoporphyrin IX. The chain is Ferrochelatase from Synechococcus sp. (strain JA-2-3B'a(2-13)) (Cyanobacteria bacterium Yellowstone B-Prime).